A 118-amino-acid chain; its full sequence is Endoribonuclease MazF9 (118 aa).

This sequence belongs to the PemK/MazF family. In terms of assembly, forms a complex with cognate antitoxin MazE9.

Functionally, toxic component of a type II toxin-antitoxin (TA) system. Upon expression in E.coli and M.smegmatis inhibits cell growth and colony formation. Its toxic effect is neutralized by coexpression with cognate antitoxin MazE9. Acts as an mRNA interferase, specifically cleaving between U and C in UAC sequences. May cleave its cognate antitoxin's gene. In E.coli expression with non-cognate antitoxins VapB27 and VapB40 partially neutralizes the toxin. The chain is Endoribonuclease MazF9 (mazF9) from Mycobacterium tuberculosis (strain ATCC 25618 / H37Rv).